The primary structure comprises 127 residues: Holo-[acyl-carrier-protein] synthase (127 aa).

Mg(2+)-binding residues include aspartate 9 and glutamate 58.

The protein belongs to the P-Pant transferase superfamily. AcpS family. Requires Mg(2+) as cofactor.

The protein resides in the cytoplasm. The enzyme catalyses apo-[ACP] + CoA = holo-[ACP] + adenosine 3',5'-bisphosphate + H(+). Functionally, transfers the 4'-phosphopantetheine moiety from coenzyme A to a Ser of acyl-carrier-protein. The sequence is that of Holo-[acyl-carrier-protein] synthase from Shewanella sp. (strain MR-7).